Reading from the N-terminus, the 216-residue chain is 3-keto-L-gulonate-6-phosphate decarboxylase UlaD (216 aa).

Asp11 is a binding site for substrate. Positions 33 and 62 each coordinate Mg(2+). Arg192 lines the substrate pocket.

This sequence belongs to the HPS/KGPDC family. KGPDC subfamily. As to quaternary structure, homodimer. The cofactor is Mg(2+).

The catalysed reaction is 3-dehydro-L-gulonate 6-phosphate + H(+) = L-xylulose 5-phosphate + CO2. The protein operates within cofactor degradation; L-ascorbate degradation; D-xylulose 5-phosphate from L-ascorbate: step 2/4. Its function is as follows. Catalyzes the decarboxylation of 3-keto-L-gulonate-6-P into L-xylulose-5-P. Is involved in the anaerobic L-ascorbate utilization. The sequence is that of 3-keto-L-gulonate-6-phosphate decarboxylase UlaD from Escherichia coli O127:H6 (strain E2348/69 / EPEC).